Reading from the N-terminus, the 681-residue chain is Cobalamin-dependent radical SAM methyltransferase TokK (681 aa).

A B12-binding domain is found at 1–144 (MSAELASRGR…ATRLSDHPDY (144 aa)). Residues asparagine 18, serine 72, tyrosine 74, valine 75, histidine 103, glycine 126, and glutamate 127 each contribute to the cob(II)alamin site. Residues 192 to 417 (RGLRFYALWE…RMYVERPGTP (226 aa)) enclose the Radical SAM core domain. [4Fe-4S] cluster contacts are provided by cysteine 206 and cysteine 210. Phenylalanine 212 is a binding site for 5'-deoxyadenosine. A [4Fe-4S] cluster-binding site is contributed by cysteine 213. 2 residues coordinate cob(II)alamin: aspartate 214 and cysteine 249. 5'-deoxyadenosine-binding residues include glutamine 312, glutamate 349, and glycine 384.

Belongs to the methyltransferase superfamily. [4Fe-4S] cluster serves as cofactor. Requires cob(II)alamin as cofactor.

It participates in antibiotic biosynthesis. Its function is as follows. Methyltransferase involved in the biosynthesis of the beta-lactam carbapenem antibiotic asparenomycin. Catalyzes three consecutive S-adenosyl-L-methionine-dependent methylations to build out the C6-isopropyl side chain in a stereocontrolled manner. This chain is Cobalamin-dependent radical SAM methyltransferase TokK, found in Streptomyces tokunonensis.